The following is a 503-amino-acid chain: Variant surface glycoprotein ILTAT 1.3 (503 aa).

The signal sequence occupies residues 1–29 (MTKAYENRMLLQALVLAAVLCTTHAEGTA). 2 cysteine pairs are disulfide-bonded: cysteine 42/cysteine 168 and cysteine 150/cysteine 206. N-linked (GlcNAc...) asparagine glycans are attached at residues asparagine 419 and asparagine 432. Residue aspartate 480 is the site of GPI-anchor amidated aspartate attachment. A propeptide spans 481–503 (SSFILNKQFALSVVSAAFAALLF) (removed in mature form).

It localises to the cell membrane. Its function is as follows. VSG forms a coat on the surface of the parasite. The trypanosome evades the immune response of the host by expressing a series of antigenically distinct VSGs from an estimated 1000 VSG genes. This chain is Variant surface glycoprotein ILTAT 1.3, found in Trypanosoma brucei brucei.